The chain runs to 369 residues: tRNA 2-selenouridine synthase (369 aa).

In terms of domain architecture, Rhodanese spans 15 to 138 (FIAGQPLIDL…MRQYLIGVIE (124 aa)). The S-selanylcysteine intermediate role is filled by C98.

The protein belongs to the SelU family. Monomer.

It carries out the reaction 5-methylaminomethyl-2-thiouridine(34) in tRNA + selenophosphate + (2E)-geranyl diphosphate + H2O + H(+) = 5-methylaminomethyl-2-selenouridine(34) in tRNA + (2E)-thiogeraniol + phosphate + diphosphate. It catalyses the reaction 5-methylaminomethyl-2-thiouridine(34) in tRNA + (2E)-geranyl diphosphate = 5-methylaminomethyl-S-(2E)-geranyl-thiouridine(34) in tRNA + diphosphate. The catalysed reaction is 5-methylaminomethyl-S-(2E)-geranyl-thiouridine(34) in tRNA + selenophosphate + H(+) = 5-methylaminomethyl-2-(Se-phospho)selenouridine(34) in tRNA + (2E)-thiogeraniol. The enzyme catalyses 5-methylaminomethyl-2-(Se-phospho)selenouridine(34) in tRNA + H2O = 5-methylaminomethyl-2-selenouridine(34) in tRNA + phosphate. Its function is as follows. Involved in the post-transcriptional modification of the uridine at the wobble position (U34) of tRNA(Lys), tRNA(Glu) and tRNA(Gln). Catalyzes the conversion of 2-thiouridine (S2U-RNA) to 2-selenouridine (Se2U-RNA). Acts in a two-step process involving geranylation of 2-thiouridine (S2U) to S-geranyl-2-thiouridine (geS2U) and subsequent selenation of the latter derivative to 2-selenouridine (Se2U) in the tRNA chain. This is tRNA 2-selenouridine synthase from Shewanella sp. (strain MR-7).